The primary structure comprises 361 residues: D-alanine--D-alanine ligase (361 aa).

Residues 149-353 (KKLMAAEGLP…YEELLDVLVQ (205 aa)) form the ATP-grasp domain. 176–231 (KKLLGLPVFVKPARGGSSIGISKVSRWEDLPAAVDLARQHDEKVIVESEIVGPEVE) is an ATP binding site. Mg(2+)-binding residues include D308, E320, and N322.

This sequence belongs to the D-alanine--D-alanine ligase family. Mg(2+) serves as cofactor. It depends on Mn(2+) as a cofactor.

It localises to the cytoplasm. The enzyme catalyses 2 D-alanine + ATP = D-alanyl-D-alanine + ADP + phosphate + H(+). It participates in cell wall biogenesis; peptidoglycan biosynthesis. In terms of biological role, cell wall formation. The polypeptide is D-alanine--D-alanine ligase (Corynebacterium efficiens (strain DSM 44549 / YS-314 / AJ 12310 / JCM 11189 / NBRC 100395)).